A 261-amino-acid polypeptide reads, in one-letter code: Cytochrome c oxidase subunit 3 (261 aa).

The Mitochondrial matrix segment spans residues 1–15 (MTHQTHAYHMVNPSP). The helical transmembrane segment at 16–34 (WPLTGALSALLMTSGLIMW) threads the bilayer. The Mitochondrial intermembrane portion of the chain corresponds to 35 to 40 (FHFNST). The chain crosses the membrane as a helical span at residues 41–66 (TLLMLGLTTNMLTMYQWWRDIIREST). Over 67–72 (FQGHHT) the chain is Mitochondrial matrix. Residues 73-105 (PNVQKGLRYGMILFIISEVLFFTGFFWAFYHSS) form a helical membrane-spanning segment. Residues 106–128 (LAPTPELGGCWPPTGIHPLNPLE) are Mitochondrial intermembrane-facing. Residues 129-152 (VPLLNTSVLLASGVSITWAHHSLM) traverse the membrane as a helical segment. The Mitochondrial matrix portion of the chain corresponds to 153–155 (EGN). A helical transmembrane segment spans residues 156-183 (RNHMLQALFITIALGVYFTLLQASEYYE). Topologically, residues 184-190 (APFTISD) are mitochondrial intermembrane. Residues 191–223 (GVYGSTFFVATGFHGLHVIIGSTFLIVCFFRQL) traverse the membrane as a helical segment. Topologically, residues 224 to 232 (KFHFTSSHH) are mitochondrial matrix. A helical membrane pass occupies residues 233–256 (FGFEAAAWYWHFVDVVWLFLYVSI). At 257–261 (YWWGS) the chain is on the mitochondrial intermembrane side.

This sequence belongs to the cytochrome c oxidase subunit 3 family. Component of the cytochrome c oxidase (complex IV, CIV), a multisubunit enzyme composed of 14 subunits. The complex is composed of a catalytic core of 3 subunits MT-CO1, MT-CO2 and MT-CO3, encoded in the mitochondrial DNA, and 11 supernumerary subunits COX4I, COX5A, COX5B, COX6A, COX6B, COX6C, COX7A, COX7B, COX7C, COX8 and NDUFA4, which are encoded in the nuclear genome. The complex exists as a monomer or a dimer and forms supercomplexes (SCs) in the inner mitochondrial membrane with NADH-ubiquinone oxidoreductase (complex I, CI) and ubiquinol-cytochrome c oxidoreductase (cytochrome b-c1 complex, complex III, CIII), resulting in different assemblies (supercomplex SCI(1)III(2)IV(1) and megacomplex MCI(2)III(2)IV(2)).

It is found in the mitochondrion inner membrane. The enzyme catalyses 4 Fe(II)-[cytochrome c] + O2 + 8 H(+)(in) = 4 Fe(III)-[cytochrome c] + 2 H2O + 4 H(+)(out). Functionally, component of the cytochrome c oxidase, the last enzyme in the mitochondrial electron transport chain which drives oxidative phosphorylation. The respiratory chain contains 3 multisubunit complexes succinate dehydrogenase (complex II, CII), ubiquinol-cytochrome c oxidoreductase (cytochrome b-c1 complex, complex III, CIII) and cytochrome c oxidase (complex IV, CIV), that cooperate to transfer electrons derived from NADH and succinate to molecular oxygen, creating an electrochemical gradient over the inner membrane that drives transmembrane transport and the ATP synthase. Cytochrome c oxidase is the component of the respiratory chain that catalyzes the reduction of oxygen to water. Electrons originating from reduced cytochrome c in the intermembrane space (IMS) are transferred via the dinuclear copper A center (CU(A)) of subunit 2 and heme A of subunit 1 to the active site in subunit 1, a binuclear center (BNC) formed by heme A3 and copper B (CU(B)). The BNC reduces molecular oxygen to 2 water molecules using 4 electrons from cytochrome c in the IMS and 4 protons from the mitochondrial matrix. This is Cytochrome c oxidase subunit 3 (MT-CO3) from Litocranius walleri (Gerenuk).